Consider the following 641-residue polypeptide: 1-deoxy-D-xylulose-5-phosphate synthase (641 aa).

Thiamine diphosphate is bound by residues H71 and 112-114 (SHA). Position 144 (D144) interacts with Mg(2+). Thiamine diphosphate-binding positions include 145–146 (GA), N174, Y285, and E366. N174 lines the Mg(2+) pocket.

This sequence belongs to the transketolase family. DXPS subfamily. Homodimer. Mg(2+) is required as a cofactor. Thiamine diphosphate serves as cofactor.

The enzyme catalyses D-glyceraldehyde 3-phosphate + pyruvate + H(+) = 1-deoxy-D-xylulose 5-phosphate + CO2. Its pathway is metabolic intermediate biosynthesis; 1-deoxy-D-xylulose 5-phosphate biosynthesis; 1-deoxy-D-xylulose 5-phosphate from D-glyceraldehyde 3-phosphate and pyruvate: step 1/1. Functionally, catalyzes the acyloin condensation reaction between C atoms 2 and 3 of pyruvate and glyceraldehyde 3-phosphate to yield 1-deoxy-D-xylulose-5-phosphate (DXP). The polypeptide is 1-deoxy-D-xylulose-5-phosphate synthase (Mycobacteroides abscessus (strain ATCC 19977 / DSM 44196 / CCUG 20993 / CIP 104536 / JCM 13569 / NCTC 13031 / TMC 1543 / L948) (Mycobacterium abscessus)).